The chain runs to 450 residues: Cytidylate cyclase (450 aa).

Residues 97–236 (VTMFVDIRKS…LPVDMTAKLQ (140 aa)) enclose the Guanylate cyclase domain. Phe100 contributes to the a ribonucleoside 5'-triphosphate binding site. Residues Asp102, Ile103, and Asp146 each coordinate Mn(2+). The interval 318–450 (PNQFNFECFV…YRNIIGVYIK (133 aa)) is AGS-C domain.

It belongs to the adenylyl cyclase class-4/guanylyl cyclase family. Pyrimidine cyclase subfamily. In terms of assembly, homodimer. Requires Mn(2+) as cofactor.

It is found in the cytoplasm. The catalysed reaction is CTP = 3',5'-cyclic CMP + diphosphate. Its activity is regulated as follows. In E.coli strain MG1655 transformed with both genes cCMP appears between 15 and 30 minutes after infection with phage T5 (at protein level). No cCMP accumulates in uninfected cells. In terms of biological role, pycsar (pyrimidine cyclase system for antiphage resistance) provides immunity against bacteriophage. The pyrimidine cyclase (PycC) synthesizes cyclic nucleotides in response to infection; these serve as specific second messenger signals. The signal activates the adjacent effector, leading to bacterial cell death and abortive phage infection. A clade E Pycsar system. Functionally, the pyrimidine cyclase gene of a two-gene Pycsar system, generates cyclic CMP (cCMP) from CTP in response to bacteriophage infection. Has little to no activity on ATP, GTP or UTP. Expression of this and adjacent effector EcPycTM (AC P0DV25) confers resistance to bacteriophage P1 and T5; expression of this gene alone does not confer resistance. When cells expressing the Pycsar system are infected by phage T5 at low multiplicity of infection (0.2 MOI) the culture survives, at 2.0 MOI bacteria enter growth arrest. The same cells enter growth arrest after exposure to 250 uM cCMP but not cUMP; thus the effector protein responds only to the cNMP produced by its cognate NTP cyclase. Some of the cells treated with cCMP have abnormal membrane protrusions. This chain is Cytidylate cyclase, found in Escherichia coli.